The primary structure comprises 271 residues: Putative carboxymethylenebutenolidase (271 aa).

Active-site residues include C147, D204, and H236.

The protein belongs to the dienelactone hydrolase family.

It catalyses the reaction 2-(5-oxo-2,5-dihydrofuran-2-ylidene)acetate + H2O = 4-oxohex-2-enedioate + H(+). This is Putative carboxymethylenebutenolidase (ysgA) from Escherichia coli O157:H7.